The sequence spans 130 residues: Small ribosomal subunit protein uS11 (130 aa).

It belongs to the universal ribosomal protein uS11 family. Part of the 30S ribosomal subunit. Interacts with proteins S7 and S18. Binds to IF-3.

Located on the platform of the 30S subunit, it bridges several disparate RNA helices of the 16S rRNA. Forms part of the Shine-Dalgarno cleft in the 70S ribosome. The chain is Small ribosomal subunit protein uS11 from Rippkaea orientalis (strain PCC 8801 / RF-1) (Cyanothece sp. (strain PCC 8801)).